Consider the following 315-residue polypeptide: Fructose-1,6-bisphosphatase class 1 (315 aa).

Positions 90, 111, 113, and 114 each coordinate Mg(2+). Substrate is bound by residues 114–117, Tyr-222, and Lys-253; that span reads DGSS. A Mg(2+)-binding site is contributed by Glu-259.

The protein belongs to the FBPase class 1 family. In terms of assembly, homotetramer. Mg(2+) is required as a cofactor.

It localises to the cytoplasm. It catalyses the reaction beta-D-fructose 1,6-bisphosphate + H2O = beta-D-fructose 6-phosphate + phosphate. Its pathway is carbohydrate biosynthesis; gluconeogenesis. This is Fructose-1,6-bisphosphatase class 1 from Trichlorobacter lovleyi (strain ATCC BAA-1151 / DSM 17278 / SZ) (Geobacter lovleyi).